A 339-amino-acid polypeptide reads, in one-letter code: Probable cytosolic iron-sulfur protein assembly protein CIAO1 (339 aa).

7 WD repeats span residues 14–53 (HPDS…WICK), 59–98 (GHQR…FECV), 103–142 (GHEN…EYEC), 148–187 (SHTQ…WVCC), 192–231 (GHES…NEQG), 250–289 (FHSR…DPQQ), and 301–339 (AHSQ…SEGI). The LYR motif; required for interaction with HSC20 signature appears at 176–178 (LYR).

Belongs to the WD repeat CIA1 family. In terms of assembly, component of the CIA complex. Interacts with CIAO2A and forms a complex with CIAO2B and MMS19; the interactions with CIAO2A and CIAO2B are mutually exclusive. Interacts with CHD1L, ERCC2, IREB2 and POLD1. Component of the MMXD complex, which includes CIAO1, ERCC2, CIAO2B, MMS19 and SLC25A5. Interacts with WT1. Interacts with CIAO3. Interacts (via LYR motif) with HSC20.

It is found in the cytoplasm. Key component of the cytosolic iron-sulfur protein assembly (CIA) complex, a multiprotein complex that mediates the incorporation of iron-sulfur cluster into extramitochondrial Fe/S proteins. As a CIA complex component, interacts specifically with CIAO2A or CIAO2B and MMS19 to assist different branches of iron-sulfur protein assembly, depending of its interactors. The complex CIAO1:CIAO2B:MMS19 binds to and facilitates the assembly of most cytosolic-nuclear Fe/S proteins. CIAO1:CIAO2A specifically matures ACO1 and stabilizes IREB2. Seems to specifically modulate the transactivation activity of WT1. As part of the mitotic spindle-associated MMXD complex it may play a role in chromosome segregation. The protein is Probable cytosolic iron-sulfur protein assembly protein CIAO1 of Bos taurus (Bovine).